The primary structure comprises 876 residues: Importin subunit beta-1 (876 aa).

Residue Met-1 is modified to N-acetylmethionine. HEAT repeat units follow at residues Leu-3 to Ala-29, Asn-32 to Lys-62, Ala-85 to Glu-120, Leu-129 to Asp-160, and Ser-170 to Ser-201. At Ser-12 the chain carries Phosphoserine. The 81-residue stretch at Ala-21–Thr-101 folds into the Importin N-terminal domain. Lys-211 carries the post-translational modification N6-acetyllysine. HEAT repeat units lie at residues Glu-212–Leu-247, Leu-260–Glu-302, Tyr-314–Cys-359, Ile-363–Ser-392, Pro-399–Leu-438, Leu-449–Ala-485, Ser-500–Lys-537, Tyr-544–Leu-592, His-597–Leu-639, Leu-644–Ala-680, Leu-686–Ile-724, Lys-729–Lys-777, Pro-785–Ala-828, and Leu-834–Gln-875. The tract at residues Val-286–Ala-462 is essential for high affinity interaction with RPL23A. The IAB-binding stretch occupies residues Thr-329 to Trp-342. Residues Asp-334–Asp-419 are ran-GTP binding. Residues Lys-835 and Lys-867 each carry the N6-acetyllysine modification.

This sequence belongs to the importin beta family. Importin beta-1 subfamily. Forms a complex with an importin alpha subunit. Interacts with XPO1. Forms a heterodimer with IPO7. The KPNB1/IPO7 heterodimer interacts with H1 histone. Interacts with SNUPN. Interacts with H2A, H2B, H3 and H4 histones. Component of an import snRNP complex composed of KPNB1, SNUPN, SMN1 and ZNF259. Component of a nuclear export receptor complex composed of KPNB1, Ran, SNUPN and XPO1. Interacts with SRY. Interacts with PRKCI/atypical protein kinase C iota. Interacts with KPNA2. Interacts with KPNA7. Interacts with SNAI1 (via zinc fingers) and SNAI2 (via zinc fingers). Interacts with SLC35G1 and STIM1. Interacts with DCAF8. Interacts with RAN. Interacts with NUMA1 (via C-terminus); this interaction is inhibited by RanGTP. Interacts with ZBED1/hDREF; required for nuclear import of ZBED1/hDREF. Interacts with SRP19. Interacts with RPL23A (via BIB domain), RPS7 and RPL5. Mono-ADP-ribosylated by PARP16.

It is found in the cytoplasm. Its subcellular location is the nucleus envelope. Functions in nuclear protein import, either in association with an adapter protein, like an importin-alpha subunit, which binds to nuclear localization signals (NLS) in cargo substrates, or by acting as autonomous nuclear transport receptor. Acting autonomously, serves itself as NLS receptor. Docking of the importin/substrate complex to the nuclear pore complex (NPC) is mediated by KPNB1 through binding to nucleoporin FxFG repeats and the complex is subsequently translocated through the pore by an energy requiring, Ran-dependent mechanism. At the nucleoplasmic side of the NPC, Ran binds to importin-beta and the three components separate and importin-alpha and -beta are re-exported from the nucleus to the cytoplasm where GTP hydrolysis releases Ran from importin. The directionality of nuclear import is thought to be conferred by an asymmetric distribution of the GTP- and GDP-bound forms of Ran between the cytoplasm and nucleus. Mediates autonomously the nuclear import of ribosomal proteins RPL23A, RPS7 and RPL5. In association with IPO7, mediates the nuclear import of H1 histone. In vitro, mediates nuclear import of H2A, H2B, H3 and H4 histones. Imports MRTFA, SNAI1 and PRKCI into the nucleus. This Mus musculus (Mouse) protein is Importin subunit beta-1 (Kpnb1).